Reading from the N-terminus, the 382-residue chain is MIOREX complex component 5 (382 aa).

Residues 1–12 (MRRTFSQLATRL) constitute a mitochondrion transit peptide.

In terms of assembly, associates with the mitochondrial ribosome.

It localises to the mitochondrion. Functionally, component of MIOREX complexes, large expressome-like assemblies of ribosomes with factors involved in all the steps of post-transcriptional gene expression. This chain is MIOREX complex component 5, found in Saccharomyces cerevisiae (strain ATCC 204508 / S288c) (Baker's yeast).